Consider the following 452-residue polypeptide: Pup--protein ligase (452 aa).

Residue glutamate 9 coordinates Mg(2+). Arginine 53 serves as a coordination point for ATP. Residue tyrosine 55 coordinates Mg(2+). Aspartate 57 functions as the Proton acceptor in the catalytic mechanism. Glutamate 63 is a Mg(2+) binding site. ATP contacts are provided by threonine 66 and tryptophan 419.

It belongs to the Pup ligase/Pup deamidase family. Pup-conjugating enzyme subfamily. Post-translationally, pupylated at an undetermined lysine residue by the prokaryotic ubiquitin-like protein Pup, which leads to its degradation by the proteasome and thereby constitutes a negative auto-regulation.

The enzyme catalyses ATP + [prokaryotic ubiquitin-like protein]-L-glutamate + [protein]-L-lysine = ADP + phosphate + N(6)-([prokaryotic ubiquitin-like protein]-gamma-L-glutamyl)-[protein]-L-lysine.. Its pathway is protein degradation; proteasomal Pup-dependent pathway. It participates in protein modification; protein pupylation. Its function is as follows. Catalyzes the covalent attachment of the prokaryotic ubiquitin-like protein modifier Pup to the proteasomal substrate proteins, thereby targeting them for proteasomal degradation. This tagging system is termed pupylation. The ligation reaction likely involves the side-chain carboxylate of the C-terminal glutamate of Pup and the side-chain amino group of a substrate lysine. The chain is Pup--protein ligase (pafA) from Mycolicibacterium smegmatis (strain ATCC 700084 / mc(2)155) (Mycobacterium smegmatis).